The following is a 467-amino-acid chain: Chromosomal replication initiator protein DnaA (467 aa).

Residues 1-85 (MSLSLWQQCL…FEVGAKPASS (85 aa)) are domain I, interacts with DnaA modulators. Positions 85-130 (SLQKGAVSPAAAAIPAAQVQTARVAPTIVRPGWDNVPAPAEPTYRS) are domain II. The domain III, AAA+ region stretch occupies residues 131–347 (NVNVKHTFDN…GALNRVIANA (217 aa)). Residues Gly175, Gly177, Lys178, and Thr179 each coordinate ATP. The domain IV, binds dsDNA stretch occupies residues 348-467 (NFTGRAITID…FSNLIRTLSS (120 aa)).

It belongs to the DnaA family. In terms of assembly, oligomerizes as a right-handed, spiral filament on DNA at oriC.

The protein resides in the cytoplasm. Functionally, plays an essential role in the initiation and regulation of chromosomal replication. ATP-DnaA binds to the origin of replication (oriC) to initiate formation of the DNA replication initiation complex once per cell cycle. Binds the DnaA box (a 9 base pair repeat at the origin) and separates the double-stranded (ds)DNA. Forms a right-handed helical filament on oriC DNA; dsDNA binds to the exterior of the filament while single-stranded (ss)DNA is stabiized in the filament's interior. The ATP-DnaA-oriC complex binds and stabilizes one strand of the AT-rich DNA unwinding element (DUE), permitting loading of DNA polymerase. After initiation quickly degrades to an ADP-DnaA complex that is not apt for DNA replication. Binds acidic phospholipids. This chain is Chromosomal replication initiator protein DnaA, found in Klebsiella pneumoniae (strain 342).